Reading from the N-terminus, the 310-residue chain is Thymidine kinase (310 aa).

17 to 24 (GPFGIGKT) contributes to the ATP binding site. The active-site Proton acceptor is E45. Residue Q86 participates in substrate binding. R176 is a binding site for ATP. Residue R182 coordinates substrate.

The protein belongs to the herpesviridae thymidine kinase family. Homodimer.

The catalysed reaction is thymidine + ATP = dTMP + ADP + H(+). Its function is as follows. Catalyzes the transfer of the gamma-phospho group of ATP to thymidine to generate dTMP in the salvage pathway of pyrimidine synthesis. The dTMP serves as a substrate for DNA polymerase during viral DNA replication. Allows the virus to be reactivated and to grow in non-proliferative cells lacking a high concentration of phosphorylated nucleic acid precursors. The sequence is that of Thymidine kinase from Gallus gallus (Chicken).